The primary structure comprises 377 residues: Sodium-dependent organic anion transporter (377 aa).

Residues 1–29 (MRANCSSSSACPANSSEEELPVGLEVHGN) are Extracellular-facing. N-linked (GlcNAc...) asparagine glycosylation occurs at Asn-4. Residues 30-50 (LELVFTVVSTVMMGLLMFSLG) traverse the membrane as a helical segment. Over 51–67 (CSVEIRKLWSHIRRPWG) the chain is Cytoplasmic. A helical transmembrane segment spans residues 68-88 (IAVGLLCQFGLMPFTAYLLAI). Topologically, residues 89–97 (SFSLKPVQA) are extracellular. Residues 98–118 (IAVLIMGCCPGGTISNIFTFW) traverse the membrane as a helical segment. Residues 119 to 133 (VDGDMDLSISMTTCS) are Cytoplasmic-facing. A helical transmembrane segment spans residues 134 to 154 (TVAALGMMPLCIYLYTWSWSL). The Extracellular segment spans residues 155–159 (QQNLT). N-linked (GlcNAc...) asparagine glycosylation occurs at Asn-157. A helical membrane pass occupies residues 160-180 (IPYQNIGITLVCLTIPVAFGV). At 181–195 (YVNYRWPKQSKIILK) the chain is on the cytoplasmic side. The helical transmembrane segment at 196-216 (IGAVVGGVLLLVVAVAGVVLA) threads the bilayer. At 217 to 226 (KGSWNSDITL) the chain is on the extracellular side. A helical transmembrane segment spans residues 227–247 (LTISFIFPLIGHVTGFLLALF). At 248-266 (THQSWQRCRTISLETGAQN) the chain is on the cytoplasmic side. A helical transmembrane segment spans residues 267–285 (IQMCITMLQLSFTAEHLVQ). The Extracellular portion of the chain corresponds to 286-290 (MLSFP). The helical transmembrane segment at 291 to 311 (LAYGLFQLIDGFLIVAAYQTY) threads the bilayer. At 312 to 377 (KRRLKNKHGK…EPVGHITSCE (66 aa)) the chain is on the cytoplasmic side.

The protein belongs to the bile acid:sodium symporter (BASS) (TC 2.A.28) family. Glycosylated. Highly expressed in testis, placenta and pancreas. Moderately expressed in heart, lung and mammary gland. Weakly expressed in brain, colon, kidney, liver, ovary, prostate, small intestine, spleen and thymus.

It localises to the membrane. The enzyme catalyses estrone 3-sulfate(out) + 2 Na(+)(out) = estrone 3-sulfate(in) + 2 Na(+)(in). The catalysed reaction is 17beta-estradiol 3-sulfate(out) + 2 Na(+)(out) = 17beta-estradiol 3-sulfate(in) + 2 Na(+)(in). It catalyses the reaction dehydroepiandrosterone 3-sulfate(out) + 2 Na(+)(out) = dehydroepiandrosterone 3-sulfate(in) + 2 Na(+)(in). It carries out the reaction androst-5-ene-diol 3-sulfate(out) + 2 Na(+)(out) = androst-5-ene-diol 3-sulfate(in) + 2 Na(+)(in). The enzyme catalyses pregnenolone sulfate(out) + 2 Na(+)(out) = pregnenolone sulfate(in) + 2 Na(+)(in). The catalysed reaction is taurolithocholate 3-sulfate(out) + 2 Na(+)(out) = taurolithocholate 3-sulfate(in) + 2 Na(+)(in). It catalyses the reaction androsterone 3alpha-sulfate(out) + 2 Na(+)(out) = androsterone 3alpha-sulfate(in) + 2 Na(+)(in). It carries out the reaction 5alpha-dihydrotestosterone sulfate(out) + 2 Na(+)(out) = 5alpha-dihydrotestosterone sulfate(in) + 2 Na(+)(in). The enzyme catalyses 17beta-estradiol 17-sulfate(out) + 2 Na(+)(out) = 17beta-estradiol 17-sulfate(in) + 2 Na(+)(in). The catalysed reaction is 17alpha-hydroxypregnenolone 3-sulfate(out) + 2 Na(+)(out) = 17alpha-hydroxypregnenolone 3-sulfate(in) + 2 Na(+)(in). It catalyses the reaction epiandrosterone 3-sulfate(out) + 2 Na(+)(out) = epiandrosterone 3-sulfate(in) + 2 Na(+)(in). It carries out the reaction epitestosterone 17-sulfate(out) + 2 Na(+)(out) = epitestosterone 17-sulfate(in) + 2 Na(+)(in). The enzyme catalyses testosterone 17-sulfate(out) + 2 Na(+)(out) = testosterone 17-sulfate(in) + 2 Na(+)(in). The catalysed reaction is 16alpha-hydroxydehydroepiandrosterone 3-sulfate(out) + 2 Na(+)(out) = 16alpha-hydroxydehydroepiandrosterone 3-sulfate(in) + 2 Na(+)(in). In terms of biological role, transports sulfoconjugated steroid hormones from the extracellular compartment into the cytosol in a sodium-dependent manner without hydrolysis. Steroid sulfate hormones are commonly considered to be biologically inactive metabolites, that may be activated by steroid sulfatases into free steroids. May play an important role by delivering sulfoconjugated steroids to specific target cells in reproductive organs. May play a role transporting the estriol precursor 16alpha-hydroxydehydroepiandrosterone 3-sulfate (16a-OH-DHEAS) at the fetal blood vessel endothelium. Can also transport other sulfoconjugated molecules such as taurolithocholic acid-3-sulfate and sulfoconjugated pyrenes. The sequence is that of Sodium-dependent organic anion transporter (SLC10A6) from Homo sapiens (Human).